A 768-amino-acid polypeptide reads, in one-letter code: Phosphoribosylformylglycinamidine synthase subunit PurL (768 aa).

The active site involves His44. 2 residues coordinate ATP: Tyr47 and Lys86. Residue Glu88 participates in Mg(2+) binding. Substrate-binding positions include 89 to 92 and Arg111; that span reads SHNH. His90 acts as the Proton acceptor in catalysis. Mg(2+) is bound at residue Asp112. Gln235 lines the substrate pocket. Mg(2+) is bound at residue Asp263. Residue 307–309 participates in substrate binding; it reads ESQ. 2 residues coordinate ATP: Asp518 and Gly555. Asn556 contacts Mg(2+). Residue Ser558 coordinates substrate.

This sequence belongs to the FGAMS family. Monomer. Part of the FGAM synthase complex composed of 1 PurL, 1 PurQ and 2 PurS subunits.

The protein resides in the cytoplasm. It carries out the reaction N(2)-formyl-N(1)-(5-phospho-beta-D-ribosyl)glycinamide + L-glutamine + ATP + H2O = 2-formamido-N(1)-(5-O-phospho-beta-D-ribosyl)acetamidine + L-glutamate + ADP + phosphate + H(+). Its pathway is purine metabolism; IMP biosynthesis via de novo pathway; 5-amino-1-(5-phospho-D-ribosyl)imidazole from N(2)-formyl-N(1)-(5-phospho-D-ribosyl)glycinamide: step 1/2. Part of the phosphoribosylformylglycinamidine synthase complex involved in the purines biosynthetic pathway. Catalyzes the ATP-dependent conversion of formylglycinamide ribonucleotide (FGAR) and glutamine to yield formylglycinamidine ribonucleotide (FGAM) and glutamate. The FGAM synthase complex is composed of three subunits. PurQ produces an ammonia molecule by converting glutamine to glutamate. PurL transfers the ammonia molecule to FGAR to form FGAM in an ATP-dependent manner. PurS interacts with PurQ and PurL and is thought to assist in the transfer of the ammonia molecule from PurQ to PurL. This chain is Phosphoribosylformylglycinamidine synthase subunit PurL, found in Synechococcus sp. (strain JA-2-3B'a(2-13)) (Cyanobacteria bacterium Yellowstone B-Prime).